The following is a 210-amino-acid chain: Uracil phosphoribosyltransferase (210 aa).

5-phospho-alpha-D-ribose 1-diphosphate-binding positions include Arg78, Arg103, and 130 to 138 (DPMLATGGT). Residues Ile193 and 198–200 (GDA) each bind uracil. Residue Asp199 participates in 5-phospho-alpha-D-ribose 1-diphosphate binding.

This sequence belongs to the UPRTase family. It depends on Mg(2+) as a cofactor.

It catalyses the reaction UMP + diphosphate = 5-phospho-alpha-D-ribose 1-diphosphate + uracil. Its pathway is pyrimidine metabolism; UMP biosynthesis via salvage pathway; UMP from uracil: step 1/1. Allosterically activated by GTP. Catalyzes the conversion of uracil and 5-phospho-alpha-D-ribose 1-diphosphate (PRPP) to UMP and diphosphate. The chain is Uracil phosphoribosyltransferase from Stenotrophomonas maltophilia (strain K279a).